Reading from the N-terminus, the 490-residue chain is ATP synthase subunit beta, chloroplastic (490 aa).

An ATP-binding site is contributed by 170 to 177; that stretch reads GGAGVGKT.

This sequence belongs to the ATPase alpha/beta chains family. In terms of assembly, F-type ATPases have 2 components, CF(1) - the catalytic core - and CF(0) - the membrane proton channel. CF(1) has five subunits: alpha(3), beta(3), gamma(1), delta(1), epsilon(1). CF(0) has four main subunits: a(1), b(1), b'(1) and c(9-12).

It localises to the plastid. The protein localises to the chloroplast thylakoid membrane. It catalyses the reaction ATP + H2O + 4 H(+)(in) = ADP + phosphate + 5 H(+)(out). Produces ATP from ADP in the presence of a proton gradient across the membrane. The catalytic sites are hosted primarily by the beta subunits. In Ipomoea aquatica (Water spinach), this protein is ATP synthase subunit beta, chloroplastic.